Consider the following 250-residue polypeptide: N-acyl homoserine lactonase (250 aa).

Residues His-104, His-106, Asp-108, His-109, His-169, Asp-191, and His-235 each contribute to the Zn(2+) site.

This sequence belongs to the metallo-beta-lactamase superfamily. In terms of assembly, monomer. Zn(2+) serves as cofactor.

The enzyme catalyses an N-acyl-L-homoserine lactone + H2O = an N-acyl-L-homoserine + H(+). The polypeptide is N-acyl homoserine lactonase (Bacillus cereus).